Here is a 221-residue protein sequence, read N- to C-terminus: Lipoprotein-releasing system ATP-binding protein LolD (221 aa).

The 215-residue stretch at 6-220 folds into the ABC transporter domain; sequence LILKKISKHY…YNLKNGLLNI (215 aa). ATP is bound at residue 42–49; that stretch reads GSSGSGKS.

It belongs to the ABC transporter superfamily. Lipoprotein translocase (TC 3.A.1.125) family. The complex is composed of two ATP-binding proteins (LolD) and two transmembrane proteins (LolC and LolE).

It is found in the cell inner membrane. Part of the ABC transporter complex LolCDE involved in the translocation of mature outer membrane-directed lipoproteins, from the inner membrane to the periplasmic chaperone, LolA. Responsible for the formation of the LolA-lipoprotein complex in an ATP-dependent manner. The polypeptide is Lipoprotein-releasing system ATP-binding protein LolD (Rickettsia typhi (strain ATCC VR-144 / Wilmington)).